Here is a 159-residue protein sequence, read N- to C-terminus: Ribosomal RNA large subunit methyltransferase H (159 aa).

S-adenosyl-L-methionine is bound by residues leucine 76, glycine 108, and 127 to 132; that span reads FGLLTL.

This sequence belongs to the RNA methyltransferase RlmH family. In terms of assembly, homodimer.

The protein resides in the cytoplasm. The enzyme catalyses pseudouridine(1915) in 23S rRNA + S-adenosyl-L-methionine = N(3)-methylpseudouridine(1915) in 23S rRNA + S-adenosyl-L-homocysteine + H(+). Functionally, specifically methylates the pseudouridine at position 1915 (m3Psi1915) in 23S rRNA. The protein is Ribosomal RNA large subunit methyltransferase H of Streptococcus equi subsp. zooepidemicus (strain MGCS10565).